The primary structure comprises 92 residues: Small ribosomal subunit protein bS20 (92 aa).

The segment at 1–22 (MANSPQSKKRARQAEARAAVNK) is disordered.

This sequence belongs to the bacterial ribosomal protein bS20 family.

Functionally, binds directly to 16S ribosomal RNA. In Cereibacter sphaeroides (strain ATCC 17029 / ATH 2.4.9) (Rhodobacter sphaeroides), this protein is Small ribosomal subunit protein bS20.